The following is a 382-amino-acid chain: Gap junction alpha-1 protein (382 aa).

Over 2–23 the chain is Cytoplasmic; it reads GDWSALGKLLDKVQAYSTAGGK. Ser5 is subject to Phosphoserine. Residues 24-44 form a helical membrane-spanning segment; the sequence is VWLSVLFIFRILLLGTAVESA. Residues 45–76 are Extracellular-facing; it reads WGDEQSAFRCNTQQPGCENVCYDKSFPISHVR. Cystine bridges form between Cys54–Cys192 and Cys187–Cys198. A helical transmembrane segment spans residues 77-97; it reads FWVLQIIFVSVPTLLYLAHVF. Residues 98–155 are Cytoplasmic-facing; the sequence is YVMRKEEKLNKKEEELKVAQTDGVNVEMHLKQIEIKKFKYGIEEHGKVKMRGGLLRTY. Lys144 is covalently cross-linked (Glycyl lysine isopeptide (Lys-Gly) (interchain with G-Cter in SUMO)). Residues 156 to 176 traverse the membrane as a helical segment; that stretch reads IISILFKSVFEVAFLLIQWYI. Over 177 to 207 the chain is Extracellular; that stretch reads YGFSLSAVYTCKRDPCPHQVDCFLSRPTEKT. A helical transmembrane segment spans residues 208–228; that stretch reads IFIIFMLVVSLVSLALNIIEL. The Cytoplasmic segment spans residues 229–382; the sequence is FYVFFKGVKD…SRPRPDDLEI (154 aa). Lys237 participates in a covalent cross-link: Glycyl lysine isopeptide (Lys-Gly) (interchain with G-Cter in SUMO). Residues 244-382 form an interaction with NOV region; it reads SDPYHATTGP…SRPRPDDLEI (139 aa). Position 247 is a phosphotyrosine (Tyr247). 3 positions are modified to phosphoserine: Ser255, Ser257, and Ser262. The segment at 264-382 is interaction with UBQLN4; that stretch reads KYAYFNGCSS…SRPRPDDLEI (119 aa). Cys271 bears the S-nitrosocysteine mark. Thr275 is modified (phosphothreonine). A phosphoserine mark is found at Ser306, Ser314, and Ser325. The span at 317–332 shows a compositional bias: polar residues; it reads QNRMGQAGSTISNSHA. Residues 317–382 are disordered; that stretch reads QNRMGQAGST…SRPRPDDLEI (66 aa). Thr326 carries the post-translational modification Phosphothreonine. 4 positions are modified to phosphoserine: Ser328, Ser330, Ser341, and Ser365. Residues 362 to 374 are compositionally biased toward low complexity; the sequence is RPSSRASSRASSR. At Ser368 the chain carries Phosphoserine; by PKC/PRKCG and PKC/PRKCD. Ser369 and Ser373 each carry phosphoserine.

The protein belongs to the connexin family. Alpha-type (group II) subfamily. In terms of assembly, a connexon is composed of a hexamer of connexins. Interacts with CSNK1D. Interacts with RIC1/CIP150. Interacts (via C-terminus) with TJP1. Interacts (via C-terminus) with SRC (via SH3 domain). Interacts (not ubiquitinated) with UBQLN4 (via UBA domain). Interacts with CNST. Interacts with SGSM3. Interacts with NOV. Interacts with TMEM65. Interacts with ANK3/ANKG and PKP2. Post-translationally, phosphorylation at Ser-325, Ser-328 and Ser-330 by CK1 modulates gap junction assembly. Phosphorylated at Ser-368 by PRKCG; phosphorylation induces disassembly of gap junction plaques and inhibition of gap junction activity. Phosphorylation at Ser-368 by PRKCD triggers its internalization into small vesicles leading to proteasome-mediated degradation. Sumoylated with SUMO1, SUMO2 and SUMO3, which may regulate the level of functional Cx43 gap junctions at the plasma membrane. May be desumoylated by SENP1 or SENP2. In terms of processing, acetylated in the developing cortex; leading to delocalization from the cell membrane. Post-translationally, S-nitrosylation at Cys-271 is enriched at the muscle endothelial gap junction in arteries, it augments channel permeability and may regulate of smooth muscle cell to endothelial cell communication. Expressed in heart, non-sensory epithelial cells, and in fibrocytes of the spiral ligament and the spiral limbus. Expressed in bladder smooth muscle cells (at protein level). Expressed in astrocytes (at protein level).

The protein resides in the cell membrane. It localises to the cell junction. The protein localises to the gap junction. It is found in the endoplasmic reticulum. Its function is as follows. Gap junction protein that acts as a regulator of bladder capacity. A gap junction consists of a cluster of closely packed pairs of transmembrane channels, the connexons, through which materials of low MW diffuse from one cell to a neighboring cell. Negative regulator of bladder functional capacity: acts by enhancing intercellular electrical and chemical transmission, thus sensitizing bladder muscles to cholinergic neural stimuli and causing them to contract. May play a role in cell growth inhibition through the regulation of NOV expression and localization. Plays an essential role in gap junction communication in the ventricles. In terms of biological role, connexin 43 is possibly the ATP-induced pore of mouse macrophages. In Mus musculus (Mouse), this protein is Gap junction alpha-1 protein (Gja1).